The primary structure comprises 628 residues: Chaperone protein DnaK (628 aa).

T197 carries the phosphothreonine; by autocatalysis modification. Residues 595-604 (AEAMYKKEQG) are compositionally biased toward basic and acidic residues. Positions 595-628 (AEAMYKKEQGEQAGAQPNQKAKKDDDDVIDAEVE) are disordered.

The protein belongs to the heat shock protein 70 family.

Acts as a chaperone. This chain is Chaperone protein DnaK, found in Aliarcobacter butzleri (strain RM4018) (Arcobacter butzleri).